Consider the following 126-residue polypeptide: Fluoride-specific ion channel FluC (126 aa).

3 helical membrane-spanning segments follow: residues 35-55, 71-91, and 101-121; these read WWTL…IGLL, VGML…WLLF, and LYVV…MILI. Na(+) is bound by residues Gly-75 and Thr-78.

This sequence belongs to the fluoride channel Fluc/FEX (TC 1.A.43) family.

The protein localises to the cell inner membrane. It carries out the reaction fluoride(in) = fluoride(out). With respect to regulation, na(+) is not transported, but it plays an essential structural role and its presence is essential for fluoride channel function. Its function is as follows. Fluoride-specific ion channel. Important for reducing fluoride concentration in the cell, thus reducing its toxicity. The chain is Fluoride-specific ion channel FluC from Sphingopyxis alaskensis (strain DSM 13593 / LMG 18877 / RB2256) (Sphingomonas alaskensis).